A 102-amino-acid polypeptide reads, in one-letter code: uncharacterized protein (102 aa).

This is an uncharacterized protein from Escherichia coli (Bacteriophage T4).